A 161-amino-acid chain; its full sequence is Large ribosomal subunit protein uL16 (161 aa).

Belongs to the universal ribosomal protein uL16 family.

The protein is Large ribosomal subunit protein uL16 of Methanosphaera stadtmanae (strain ATCC 43021 / DSM 3091 / JCM 11832 / MCB-3).